Consider the following 470-residue polypeptide: 3-isopropylmalate dehydratase large subunit (470 aa).

The [4Fe-4S] cluster site is built by cysteine 346, cysteine 406, and cysteine 409.

The protein belongs to the aconitase/IPM isomerase family. LeuC type 1 subfamily. In terms of assembly, heterodimer of LeuC and LeuD. The cofactor is [4Fe-4S] cluster.

The enzyme catalyses (2R,3S)-3-isopropylmalate = (2S)-2-isopropylmalate. Its pathway is amino-acid biosynthesis; L-leucine biosynthesis; L-leucine from 3-methyl-2-oxobutanoate: step 2/4. Catalyzes the isomerization between 2-isopropylmalate and 3-isopropylmalate, via the formation of 2-isopropylmaleate. In Shouchella clausii (strain KSM-K16) (Alkalihalobacillus clausii), this protein is 3-isopropylmalate dehydratase large subunit.